The chain runs to 262 residues: Adenosylcobinamide-GDP ribazoletransferase (262 aa).

Helical transmembrane passes span 43–63, 66–86, 120–140, 146–166, 191–211, and 242–262; these read YFGLVGLLIGLLSAIVFWLTQ, LPAGVSVLLAMLVGVLLTGGF, GAIALILALLLKWQLLVELAL, AGSALIVAHTVSRVVAASIIF, LFILVASGVLVLLFLKGLAAL, and AAQQICEIVCYLVLLIVGSIL.

The protein belongs to the CobS family. Requires Mg(2+) as cofactor.

It localises to the cell inner membrane. The catalysed reaction is alpha-ribazole + adenosylcob(III)inamide-GDP = adenosylcob(III)alamin + GMP + H(+). It catalyses the reaction alpha-ribazole 5'-phosphate + adenosylcob(III)inamide-GDP = adenosylcob(III)alamin 5'-phosphate + GMP + H(+). Its pathway is cofactor biosynthesis; adenosylcobalamin biosynthesis; adenosylcobalamin from cob(II)yrinate a,c-diamide: step 7/7. Functionally, joins adenosylcobinamide-GDP and alpha-ribazole to generate adenosylcobalamin (Ado-cobalamin). Also synthesizes adenosylcobalamin 5'-phosphate from adenosylcobinamide-GDP and alpha-ribazole 5'-phosphate. The polypeptide is Adenosylcobinamide-GDP ribazoletransferase (Shewanella putrefaciens (strain CN-32 / ATCC BAA-453)).